We begin with the raw amino-acid sequence, 365 residues long: Aminomethyltransferase (365 aa).

The protein belongs to the GcvT family. The glycine cleavage system is composed of four proteins: P, T, L and H.

It carries out the reaction N(6)-[(R)-S(8)-aminomethyldihydrolipoyl]-L-lysyl-[protein] + (6S)-5,6,7,8-tetrahydrofolate = N(6)-[(R)-dihydrolipoyl]-L-lysyl-[protein] + (6R)-5,10-methylene-5,6,7,8-tetrahydrofolate + NH4(+). Its function is as follows. The glycine cleavage system catalyzes the degradation of glycine. The protein is Aminomethyltransferase of Desulfitobacterium hafniense (strain Y51).